A 340-amino-acid polypeptide reads, in one-letter code: Biotin synthase (340 aa).

In terms of domain architecture, Radical SAM core spans 45–272 (NAVQVSTLLS…ASYVRLSAGR (228 aa)). Positions 60, 64, and 67 each coordinate [4Fe-4S] cluster. Cys104, Cys135, Cys195, and Arg267 together coordinate [2Fe-2S] cluster.

Belongs to the radical SAM superfamily. Biotin synthase family. Homodimer. Requires [4Fe-4S] cluster as cofactor. [2Fe-2S] cluster is required as a cofactor.

It carries out the reaction (4R,5S)-dethiobiotin + (sulfur carrier)-SH + 2 reduced [2Fe-2S]-[ferredoxin] + 2 S-adenosyl-L-methionine = (sulfur carrier)-H + biotin + 2 5'-deoxyadenosine + 2 L-methionine + 2 oxidized [2Fe-2S]-[ferredoxin]. It functions in the pathway cofactor biosynthesis; biotin biosynthesis; biotin from 7,8-diaminononanoate: step 2/2. In terms of biological role, catalyzes the conversion of dethiobiotin (DTB) to biotin by the insertion of a sulfur atom into dethiobiotin via a radical-based mechanism. This chain is Biotin synthase, found in Thioalkalivibrio sulfidiphilus (strain HL-EbGR7).